Consider the following 250-residue polypeptide: MLGRFVANGRIYEGSFEIDGELLVFDGYEVPLTAVKFLPPVVPSKIIAVGLNYIDHAEELNMPVPEEPILFMKPSTAVIGHDDCIILPQISQRVDYEGELAVVIAEDCRNVPETNAADYILGYTCFNDVTARDLQAKDGQWTRAKSFDTFAPLGPYIAEIDDPSKLGIQTRVNGKVVQKSNTSNLIFDVFQLVSFVSSVMTLKAGDVIATGTPAGVGMLKDGDVVEVEIEKIGILRNTAVKIDRQIRCEC.

The a divalent metal cation site is built by Glu97, Glu99, and Asp128.

This sequence belongs to the FAH family.

This is an uncharacterized protein from Archaeoglobus fulgidus (strain ATCC 49558 / DSM 4304 / JCM 9628 / NBRC 100126 / VC-16).